A 348-amino-acid chain; its full sequence is Ferredoxin--NADP reductase (348 aa).

Residues T25, E44, Q52, Y57, V97, F132, D298, and S339 each coordinate FAD.

This sequence belongs to the ferredoxin--NADP reductase type 2 family. In terms of assembly, homodimer. Requires FAD as cofactor.

The catalysed reaction is 2 reduced [2Fe-2S]-[ferredoxin] + NADP(+) + H(+) = 2 oxidized [2Fe-2S]-[ferredoxin] + NADPH. This Chlorobium phaeobacteroides (strain BS1) protein is Ferredoxin--NADP reductase.